Consider the following 648-residue polypeptide: Macrolide export ATP-binding/permease protein MacB 1 (648 aa).

The 239-residue stretch at 6–244 (LQLSGIRRHF…PAPTTSRADT (239 aa)) folds into the ABC transporter domain. An ATP-binding site is contributed by 42-49 (GASGSGKS). The tract at residues 222–248 (VVADRRREPTPPSPAPTTSRADTGGRG) is disordered. A run of 4 helical transmembrane segments spans residues 273–293 (FLTMLGIIIGIAAVVSVVALG), 521–541 (LTLLIAMIALISLVVGGIGVM), 578–598 (LVCLLGGAAGVLLSLLIGVLF), and 613–633 (AVLMAFFCSSLIGVLFGFFPA).

It belongs to the ABC transporter superfamily. Macrolide exporter (TC 3.A.1.122) family. As to quaternary structure, homodimer. Part of the tripartite efflux system MacAB-TolC, which is composed of an inner membrane transporter, MacB, a periplasmic membrane fusion protein, MacA, and an outer membrane component, TolC. The complex forms a large protein conduit and can translocate molecules across both the inner and outer membranes. Interacts with MacA.

The protein resides in the cell inner membrane. In terms of biological role, part of the tripartite efflux system MacAB-TolC. MacB is a non-canonical ABC transporter that contains transmembrane domains (TMD), which form a pore in the inner membrane, and an ATP-binding domain (NBD), which is responsible for energy generation. Confers resistance against macrolides. The sequence is that of Macrolide export ATP-binding/permease protein MacB 1 from Aeromonas hydrophila subsp. hydrophila (strain ATCC 7966 / DSM 30187 / BCRC 13018 / CCUG 14551 / JCM 1027 / KCTC 2358 / NCIMB 9240 / NCTC 8049).